The sequence spans 125 residues: Small ribosomal subunit protein uS12 (125 aa).

D89 carries the post-translational modification 3-methylthioaspartic acid. The tract at residues 100-125 (GSLDTQGVQNRKQARSKYGAKRPKKA) is disordered. Basic residues predominate over residues 111 to 125 (KQARSKYGAKRPKKA).

It belongs to the universal ribosomal protein uS12 family. In terms of assembly, part of the 30S ribosomal subunit. Contacts proteins S8 and S17. May interact with IF1 in the 30S initiation complex.

Functionally, with S4 and S5 plays an important role in translational accuracy. Interacts with and stabilizes bases of the 16S rRNA that are involved in tRNA selection in the A site and with the mRNA backbone. Located at the interface of the 30S and 50S subunits, it traverses the body of the 30S subunit contacting proteins on the other side and probably holding the rRNA structure together. The combined cluster of proteins S8, S12 and S17 appears to hold together the shoulder and platform of the 30S subunit. The protein is Small ribosomal subunit protein uS12 of Thioalkalivibrio sulfidiphilus (strain HL-EbGR7).